The following is a 342-amino-acid chain: Phenylalanine--tRNA ligase alpha subunit (342 aa).

Glutamate 257 serves as a coordination point for Mg(2+).

This sequence belongs to the class-II aminoacyl-tRNA synthetase family. Phe-tRNA synthetase alpha subunit type 1 subfamily. As to quaternary structure, tetramer of two alpha and two beta subunits. Mg(2+) is required as a cofactor.

Its subcellular location is the cytoplasm. It catalyses the reaction tRNA(Phe) + L-phenylalanine + ATP = L-phenylalanyl-tRNA(Phe) + AMP + diphosphate + H(+). The sequence is that of Phenylalanine--tRNA ligase alpha subunit from Legionella pneumophila subsp. pneumophila (strain Philadelphia 1 / ATCC 33152 / DSM 7513).